A 355-amino-acid polypeptide reads, in one-letter code: Myricetin 7/4'-O-methyltransferase 2 (355 aa).

Residue Asp-221 coordinates S-adenosyl-L-methionine. His-259 acts as the Proton acceptor in catalysis.

Belongs to the class I-like SAM-binding methyltransferase superfamily. Cation-independent O-methyltransferase family. As to quaternary structure, homodimer. In terms of tissue distribution, mainly expressed in leaves secreting glandular trichomes types 1 and 4 and, to a lesser extent, in storage trichomes type 6.

The catalysed reaction is quercetin + S-adenosyl-L-methionine = rhamnetin + S-adenosyl-L-homocysteine + H(+). The enzyme catalyses kaempferol + S-adenosyl-L-methionine = kaempferide + S-adenosyl-L-homocysteine + H(+). It carries out the reaction myricetin + S-adenosyl-L-methionine = 7-O-methylmyricetin + S-adenosyl-L-homocysteine + H(+). It catalyses the reaction kaempferide + S-adenosyl-L-methionine = 7,4'-O-dimethylkaempferol + S-adenosyl-L-homocysteine + H(+). The catalysed reaction is isorhamnetin + S-adenosyl-L-methionine = 3',4'-O-dimethylquercetin + S-adenosyl-L-homocysteine + 2 H(+). The enzyme catalyses 3',4',5,7-tetrahydroxy-3-methoxyflavone + S-adenosyl-L-methionine = 3',4',5-trihydroxy-3,7-dimethoxyflavone + S-adenosyl-L-homocysteine + H(+). It carries out the reaction rhamnetin + S-adenosyl-L-methionine = 7,4'-O-dimethylquercetin + S-adenosyl-L-homocysteine + H(+). It catalyses the reaction syringetin + S-adenosyl-L-methionine = 7,3',5'-O-trimethylmyricetin + S-adenosyl-L-homocysteine + H(+). The catalysed reaction is 3',4',5'-O-trimethylmyricetin + S-adenosyl-L-methionine = 7,3',4',5'-O-tetramethylmyricetin + S-adenosyl-L-homocysteine. It functions in the pathway flavonoid metabolism. Functionally, flavonoid 7/4'-O-methyltransferase involved in the biosynthesis of polymethoxylated flavonoids natural products such as myricetin derivatives, aroma compounds possessing antioxidant properties and exhibiting pharmacological activities such as anti-carcinogen, anti-viral, anti-thrombotic, anti-diabetic, anti-atherosclerotic, and anti-inflammatory effects. Catalyzes S-adenosylmethionine-dependent regioselective 7/4'-O-methylation of flavonoids; active on various hydroxylated flavonoid substrates, including myricetin, quercetin and kaempferol. Mediates the formation of 4'-methyl derivatives from kaempferol, 3'-methyl quercetin (isorhamnetin), 7-methyl quercetin (rhamnetin) and 3'-methyl myricetin, producing 4'-methyl kaempferol (kaempferide), 3',4'-dimethyl quercetin (4'-O-methyl isorhamnetin), 7,4'-dimethyl quercetin (4'-O-methyl rhamnetin, rhamnacene) and 3',4'-dimethyl myricetin, respectively. Triggers the 7-O-methylation of quercetin, myricetin, 4'-methyl kaempferol (kaempferide), 3-methyl quercetin, 3',5'-dimethyl myricetin (syringetin) and 3',4',5'-trimethyl myricetin, thus leading to production of 7-methyl quercetin (rhamnetin), 7-methyl myricetin, 7,4'-dimethyl kaempferol (7-O-methyl kaempferide), 3,7-dimethyl quercetin, 7,3',5'-trimethyl myricetin (7-O-methyl syringetin) and 7,3',4',5'-tetramethyl myricetin, respectively. This Solanum habrochaites (Wild tomato) protein is Myricetin 7/4'-O-methyltransferase 2.